The primary structure comprises 305 residues: tRNA dimethylallyltransferase (305 aa).

9–16 (GPTAVGKT) is a binding site for ATP. 11 to 16 (TAVGKT) provides a ligand contact to substrate. Positions 34–37 (DSRQ) are interaction with substrate tRNA.

This sequence belongs to the IPP transferase family. As to quaternary structure, monomer. Mg(2+) serves as cofactor.

It carries out the reaction adenosine(37) in tRNA + dimethylallyl diphosphate = N(6)-dimethylallyladenosine(37) in tRNA + diphosphate. Its function is as follows. Catalyzes the transfer of a dimethylallyl group onto the adenine at position 37 in tRNAs that read codons beginning with uridine, leading to the formation of N6-(dimethylallyl)adenosine (i(6)A). This Roseiflexus sp. (strain RS-1) protein is tRNA dimethylallyltransferase.